Consider the following 196-residue polypeptide: Endonuclease V (196 aa).

2 residues coordinate Mg(2+): Asp37 and Asp98.

This sequence belongs to the endonuclease V family. Requires Mg(2+) as cofactor.

It localises to the cytoplasm. The enzyme catalyses Endonucleolytic cleavage at apurinic or apyrimidinic sites to products with a 5'-phosphate.. In terms of biological role, DNA repair enzyme involved in the repair of deaminated bases. Selectively cleaves double-stranded DNA at the second phosphodiester bond 3' to a deoxyinosine leaving behind the intact lesion on the nicked DNA. This is Endonuclease V from Sulfolobus acidocaldarius (strain ATCC 33909 / DSM 639 / JCM 8929 / NBRC 15157 / NCIMB 11770).